We begin with the raw amino-acid sequence, 207 residues long: Dephospho-CoA kinase (207 aa).

Residues 8–207 (AIALTGSIGS…LPCVDCVQSS (200 aa)) enclose the DPCK domain. 16-21 (GSGKST) provides a ligand contact to ATP.

The protein belongs to the CoaE family.

It is found in the cytoplasm. It catalyses the reaction 3'-dephospho-CoA + ATP = ADP + CoA + H(+). It participates in cofactor biosynthesis; coenzyme A biosynthesis; CoA from (R)-pantothenate: step 5/5. Functionally, catalyzes the phosphorylation of the 3'-hydroxyl group of dephosphocoenzyme A to form coenzyme A. The sequence is that of Dephospho-CoA kinase from Helicobacter hepaticus (strain ATCC 51449 / 3B1).